Consider the following 633-residue polypeptide: Chaperone protein HtpG (633 aa).

Residues 1–341 form an a; substrate-binding region; sequence MTAPHETMSF…SADLPLNVSR (341 aa). The segment at 342–562 is b; the sequence is ELLQESRDVK…EGDMSGYLQR (221 aa). The segment at 563-633 is c; that stretch reads LLKQAGQKAP…YVQRVNKLLA (71 aa).

Belongs to the heat shock protein 90 family. As to quaternary structure, homodimer.

It localises to the cytoplasm. Functionally, molecular chaperone. Has ATPase activity. The chain is Chaperone protein HtpG from Cupriavidus taiwanensis (strain DSM 17343 / BCRC 17206 / CCUG 44338 / CIP 107171 / LMG 19424 / R1) (Ralstonia taiwanensis (strain LMG 19424)).